We begin with the raw amino-acid sequence, 513 residues long: Glutamyl-tRNA(Gln) amidotransferase subunit A (513 aa).

Active-site charge relay system residues include K85 and S160. S184 functions as the Acyl-ester intermediate in the catalytic mechanism.

The protein belongs to the amidase family. GatA subfamily. As to quaternary structure, heterotrimer of A, B and C subunits.

It catalyses the reaction L-glutamyl-tRNA(Gln) + L-glutamine + ATP + H2O = L-glutaminyl-tRNA(Gln) + L-glutamate + ADP + phosphate + H(+). Functionally, allows the formation of correctly charged Gln-tRNA(Gln) through the transamidation of misacylated Glu-tRNA(Gln) in organisms which lack glutaminyl-tRNA synthetase. The reaction takes place in the presence of glutamine and ATP through an activated gamma-phospho-Glu-tRNA(Gln). In Bifidobacterium longum subsp. infantis (strain ATCC 15697 / DSM 20088 / JCM 1222 / NCTC 11817 / S12), this protein is Glutamyl-tRNA(Gln) amidotransferase subunit A.